The chain runs to 353 residues: Rhodopsin (353 aa).

The Extracellular segment spans residues 1 to 36; sequence MNGTEGPYFYIPMVNTTGIVRSPYEYPQYYLVNPAA. N-linked (GlcNAc...) asparagine glycans are attached at residues Asn2 and Asn15. A helical transmembrane segment spans residues 37 to 61; sequence YAALGAYMFLLILLGFPINFLTLYV. Residues 62-73 lie on the Cytoplasmic side of the membrane; it reads TIEHKKLRTPLN. Residues 74-96 form a helical membrane-spanning segment; it reads YILLNLAVANLFMVFGGFTTTMY. The Extracellular portion of the chain corresponds to 97-110; sequence TSMHGYFVLGRLGC. Cys110 and Cys187 are joined by a disulfide. A helical membrane pass occupies residues 111 to 133; sequence NLEGFFATLGGEIALWSLVVLAV. The short motif at 134 to 136 is the 'Ionic lock' involved in activated form stabilization element; sequence ERW. Residues 134–152 are Cytoplasmic-facing; it reads ERWMVVCKPISNFRFGENH. The chain crosses the membrane as a helical span at residues 153-173; that stretch reads AIMGLAFTWVMASACAVPPLV. At 174 to 202 the chain is on the extracellular side; that stretch reads GWSRYIPEGMQCSCGIDYYTRAEGFNNES. Asn200 is a glycosylation site (N-linked (GlcNAc...) asparagine). A helical membrane pass occupies residues 203-224; it reads FVIYMFVCHFLIPLVVVFFCYG. Over 225–252 the chain is Cytoplasmic; that stretch reads RLLCAVKEAAAAQQESETTQRAEREVSR. Residues 253–274 form a helical membrane-spanning segment; sequence MVVIMVVAFLICWCPYAGVAWY. Residues 275-286 are Extracellular-facing; the sequence is IFTHQGSEFGPL. The chain crosses the membrane as a helical span at residues 287–308; it reads FMTFPAFFAKSSSIYNPMIYIC. The residue at position 296 (Lys296) is an N6-(retinylidene)lysine. Topologically, residues 309–353 are cytoplasmic; that stretch reads MNKQFRHCMITTLCCGKNPFEEEEGASTTSKTEASSVSSSSVSPA. Residues Cys322 and Cys323 are each lipidated (S-palmitoyl cysteine). The disordered stretch occupies residues 330–353; that stretch reads EEEGASTTSKTEASSVSSSSVSPA. A compositionally biased stretch (low complexity) spans 334 to 353; the sequence is ASTTSKTEASSVSSSSVSPA.

This sequence belongs to the G-protein coupled receptor 1 family. Opsin subfamily. Phosphorylated on some or all of the serine and threonine residues present in the C-terminal region. In terms of processing, contains one covalently linked retinal chromophore.

It is found in the membrane. It localises to the cell projection. Its subcellular location is the cilium. The protein localises to the photoreceptor outer segment. Photoreceptor required for image-forming vision at low light intensity. While most salt water fish species use retinal as chromophore, most freshwater fish use 3-dehydroretinal, or a mixture of retinal and 3-dehydroretinal. Light-induced isomerization of 11-cis to all-trans retinal triggers a conformational change that activates signaling via G-proteins. Subsequent receptor phosphorylation mediates displacement of the bound G-protein alpha subunit by arrestin and terminates signaling. This chain is Rhodopsin (rho), found in Mugil cephalus (Flathead mullet).